The following is a 148-amino-acid chain: uncharacterized protein (148 aa).

A helical transmembrane segment spans residues 22 to 40 (YFLSLTVVISIIHLFTTCV). The tract at residues 43–141 (HNHSTHFPYL…YYPISRHYLH (99 aa)) is histidine-rich.

Its subcellular location is the host membrane. This is an uncharacterized protein from African swine fever virus (strain Badajoz 1971 Vero-adapted) (Ba71V).